Consider the following 82-residue polypeptide: uncharacterized protein (82 aa).

Belongs to the chlamydial CPn_0711/CT_665/TC_0036 family.

This is an uncharacterized protein from Chlamydia pneumoniae (Chlamydophila pneumoniae).